Here is a 106-residue protein sequence, read N- to C-terminus: MITTTSPTIEGKQIIEYKKIVFGEVITGINVLKDIGAGIRNFFGGRSGGYEEELIQAREAAIEEMENRAEALGANAIIAVDVDYEVLGADNGMLMVSVSGTAVVVE.

Belongs to the UPF0145 family.

In Listeria grayi (Listeria murrayi), this protein is UPF0145 protein.